The primary structure comprises 230 residues: Heptaprenylglyceryl phosphate synthase (230 aa).

Lys12 provides a ligand contact to sn-glycerol 1-phosphate. Mg(2+) is bound by residues Asp14 and Thr40. Sn-glycerol 1-phosphate is bound by residues 159 to 164 (YIEYSG), Gly189, and 209 to 210 (GD).

Belongs to the GGGP/HepGP synthase family. Group I subfamily. As to quaternary structure, homodimer. It depends on Mg(2+) as a cofactor.

It carries out the reaction sn-glycerol 1-phosphate + all-trans-heptaprenyl diphosphate = 3-heptaprenyl-sn-glycero-1-phosphate + diphosphate. It functions in the pathway membrane lipid metabolism; glycerophospholipid metabolism. In terms of biological role, prenyltransferase that catalyzes in vivo the transfer of the heptaprenyl moiety of heptaprenyl pyrophosphate (HepPP; 35 carbon atoms) to the C3 hydroxyl of sn-glycerol-1-phosphate (G1P), producing heptaprenylglyceryl phosphate (HepGP). This reaction is an ether-bond-formation step in the biosynthesis of archaea-type G1P-based membrane lipids found in Bacillales. To a much lesser extent, is also able to use geranylgeranyl diphosphate (GGPP; C20) as the prenyl donor. The polypeptide is Heptaprenylglyceryl phosphate synthase (Staphylococcus aureus (strain NCTC 8325 / PS 47)).